An 870-amino-acid polypeptide reads, in one-letter code: Leucine--tRNA ligase (870 aa).

The short motif at 55–65 (PYPSGTLHMGH) is the 'HIGH' region element. A 'KMSKS' region motif is present at residues 626 to 630 (KMSKS). K629 provides a ligand contact to ATP.

Belongs to the class-I aminoacyl-tRNA synthetase family.

The protein localises to the cytoplasm. It carries out the reaction tRNA(Leu) + L-leucine + ATP = L-leucyl-tRNA(Leu) + AMP + diphosphate. The polypeptide is Leucine--tRNA ligase (Prochlorococcus marinus (strain SARG / CCMP1375 / SS120)).